A 97-amino-acid polypeptide reads, in one-letter code: Small ribosomal subunit protein bS6 (97 aa).

Belongs to the bacterial ribosomal protein bS6 family.

Binds together with bS18 to 16S ribosomal RNA. This Listeria innocua serovar 6a (strain ATCC BAA-680 / CLIP 11262) protein is Small ribosomal subunit protein bS6.